Here is a 336-residue protein sequence, read N- to C-terminus: Anthranilate phosphoribosyltransferase (336 aa).

Residues G82, 85-86 (GD), T90, 92-95 (NIST), 110-118 (KHGNRSVSS), and S122 each bind 5-phospho-alpha-D-ribose 1-diphosphate. An anthranilate-binding site is contributed by G82. S94 contributes to the Mg(2+) binding site. N113 is an anthranilate binding site. R168 contacts anthranilate. Positions 227 and 228 each coordinate Mg(2+).

It belongs to the anthranilate phosphoribosyltransferase family. Homodimer. Mg(2+) is required as a cofactor.

It catalyses the reaction N-(5-phospho-beta-D-ribosyl)anthranilate + diphosphate = 5-phospho-alpha-D-ribose 1-diphosphate + anthranilate. It participates in amino-acid biosynthesis; L-tryptophan biosynthesis; L-tryptophan from chorismate: step 2/5. Catalyzes the transfer of the phosphoribosyl group of 5-phosphorylribose-1-pyrophosphate (PRPP) to anthranilate to yield N-(5'-phosphoribosyl)-anthranilate (PRA). In Leptospira interrogans serogroup Icterohaemorrhagiae serovar Lai (strain 56601), this protein is Anthranilate phosphoribosyltransferase.